A 958-amino-acid chain; its full sequence is MRSQRLAGHLSAAARTIHALSLPIILFWVALTIVVNVVAPQLQSVARTHSVALGPHDAPSLIAMKRIGKDFQQFDSDTTAMVLLEGQEKLGDEAHRFYDVLVTKLSQDTTHVQHIENFWGDPLTAAGSQSADGKAAYVQLNLTGDQGGSQANESVAAVQRIVDSVPPPPGIKAYVTGPGPLGADRVVYGDRSLHTITGISIAVIAIMLFIAYRSLSAALIMLLTVGLELLAVRGIISTFAVNDLMGLSTFTVNVLVALTIAASTDYIIFLVGRYQEARATGQNREAAYYTMFGGTAHVVLASGLTVAGAMYCLGFTRLPYFNTLASPCAIGLVTVMLASLTLAPAIIAVASRFGLFDPKRATTKRRWRRIGTVVVRWPGPVLAATLLIALIGLLALPKYQTNYNERYYIPSAAPSNIGYLASDRHFPQARMEPEVLMVEADHDLRNPTDMLILDRIAKTVFHTPGIARVQSITRPLGAPIDHSSIPFQLGMQSTMTIENLQNLKDRVADLSTLTDQLQRMIDITQRTQELTRQLTDATHDMNAHTRQMRDNANELRDRIADFDDFWRPLRSFTYWERHCFDIPICWSMRSLLNSMDNVDKLTEDLANLTDDTERMDTTQRQLLAQLDPTIATMQTVKDLAQTLTSAFSGLVTQMEDMTRNATVMGRTFDAANNDDSFYLPPEAFQNPDFQRGLKLFLSPDGTCARFVITHRGDPASAEGISHIDPIMQAADEAVKGTPLQAASIYLAGTSSTYKDIHEGTLYDVMIAVVASLCLIFIIMLGITRSVVASAVIVGTVALSLGSAFGLSVLIWQHILHMPLHWLVLPMAIIVMLAVGSDYNLLLIARFQEEIGAGLKTGMIRAMAGTGRVVTIAGLVFAFTMGSMVASDLRVVGQIGTTIMIGLLFDTLVVRSYMTPALATLLGRWFWWPRRVDRLARQPQVLGPRRTTALSAERAALLQ.

Transmembrane regions (helical) follow at residues 19 to 39 (ALSL…NVVA), 192 to 212 (SLHT…FIAY), 216 to 236 (SAAL…RGII), 252 to 272 (VNVL…FLVG), 295 to 315 (TAHV…CLGF), 329 to 349 (AIGL…IIAV), 377 to 397 (WPGP…LALP), 762 to 782 (YDVM…MLGI), 791 to 811 (VIVG…VLIW), 814 to 834 (ILHM…MLAV), 868 to 888 (VVTI…ASDL), and 906 to 927 (TLVV…WFWW).

It belongs to the resistance-nodulation-cell division (RND) (TC 2.A.6) family. MmpL subfamily.

The protein localises to the cell membrane. The protein is Probable transport protein MmpL1 (mmpL1) of Mycobacterium tuberculosis (strain CDC 1551 / Oshkosh).